We begin with the raw amino-acid sequence, 273 residues long: Shikimate dehydrogenase (NADP(+)) (273 aa).

Residues 14–16 (SKS) and Thr-61 each bind shikimate. The active-site Proton acceptor is the Lys-65. Asp-77 contacts NADP(+). Asn-86 and Asp-102 together coordinate shikimate. Residues 126–130 (GAGGA), 150–155 (NRTYEK), and Met-213 contribute to the NADP(+) site. Tyr-215 is a shikimate binding site. Gly-237 serves as a coordination point for NADP(+).

Belongs to the shikimate dehydrogenase family. As to quaternary structure, homodimer.

It catalyses the reaction shikimate + NADP(+) = 3-dehydroshikimate + NADPH + H(+). Its pathway is metabolic intermediate biosynthesis; chorismate biosynthesis; chorismate from D-erythrose 4-phosphate and phosphoenolpyruvate: step 4/7. Involved in the biosynthesis of the chorismate, which leads to the biosynthesis of aromatic amino acids. Catalyzes the reversible NADPH linked reduction of 3-dehydroshikimate (DHSA) to yield shikimate (SA). This is Shikimate dehydrogenase (NADP(+)) from Aliivibrio salmonicida (strain LFI1238) (Vibrio salmonicida (strain LFI1238)).